The sequence spans 119 residues: Large ribosomal subunit protein uL18 (119 aa).

The tract at residues 1 to 20 (MSQIDKAARRQKIKARSRAT) is disordered. The span at 9–19 (RRQKIKARSRA) shows a compositional bias: basic residues.

Belongs to the universal ribosomal protein uL18 family. In terms of assembly, part of the 50S ribosomal subunit; part of the 5S rRNA/L5/L18/L25 subcomplex. Contacts the 5S and 23S rRNAs.

This is one of the proteins that bind and probably mediate the attachment of the 5S RNA into the large ribosomal subunit, where it forms part of the central protuberance. In Chlorobaculum parvum (strain DSM 263 / NCIMB 8327) (Chlorobium vibrioforme subsp. thiosulfatophilum), this protein is Large ribosomal subunit protein uL18.